An 86-amino-acid chain; its full sequence is Cell division topological specificity factor (86 aa).

This sequence belongs to the MinE family.

Its function is as follows. Prevents the cell division inhibition by proteins MinC and MinD at internal division sites while permitting inhibition at polar sites. This ensures cell division at the proper site by restricting the formation of a division septum at the midpoint of the long axis of the cell. The protein is Cell division topological specificity factor of Shewanella frigidimarina (strain NCIMB 400).